A 396-amino-acid chain; its full sequence is NADH-quinone oxidoreductase subunit D 1 (396 aa).

The protein belongs to the complex I 49 kDa subunit family. NDH-1 is composed of 14 different subunits. Subunits NuoB, C, D, E, F, and G constitute the peripheral sector of the complex.

The protein resides in the cell inner membrane. It catalyses the reaction a quinone + NADH + 5 H(+)(in) = a quinol + NAD(+) + 4 H(+)(out). Functionally, NDH-1 shuttles electrons from NADH, via FMN and iron-sulfur (Fe-S) centers, to quinones in the respiratory chain. The immediate electron acceptor for the enzyme in this species is believed to be ubiquinone. Couples the redox reaction to proton translocation (for every two electrons transferred, four hydrogen ions are translocated across the cytoplasmic membrane), and thus conserves the redox energy in a proton gradient. The polypeptide is NADH-quinone oxidoreductase subunit D 1 (Rhizobium meliloti (strain 1021) (Ensifer meliloti)).